The primary structure comprises 195 residues: MIRTIIVFMLLTISFGQNIIDYHCDNCDENAECMVELKEDATFSHYKCACKSGYSGDGYICLANKCQFDYECPSSYFHGECNNGICACRENNGFVWNPSFDNLIDRDVCKCEYGSNLYWFGGRAICIPNGQCMEKYHCTSTYEFYKISCQEPGSYGNFGICVCNYGYQQNDNECYCPPHKKEVWDSSNPRYICLE.

The signal sequence occupies residues 1–16 (MIRTIIVFMLLTISFG).

This is an uncharacterized protein from Acanthamoeba polyphaga mimivirus (APMV).